Consider the following 538-residue polypeptide: Low affinity inorganic phosphate transporter 3 (538 aa).

Residues 1-24 (MAKDQLQVLNALDVAKTQLYHFTA) lie on the Cytoplasmic side of the membrane. The chain crosses the membrane as a helical span at residues 25 to 45 (IVIAGMGFFTDAYDLFCISLV). Residues 46 to 70 (TKLLGRIYYFHEGAPKPGILPSGIS) are Extracellular-facing. The helical transmembrane segment at 71–91 (AAVNGVAFIGTLSGQLFFGWL) threads the bilayer. Residues 92-99 (GDKLGRKK) lie on the Cytoplasmic side of the membrane. A helical transmembrane segment spans residues 100-120 (VYGMTLMLMVICSIACGLSFG). At 121–122 (KT) the chain is on the extracellular side. The helical transmembrane segment at 123–143 (ANGVIATLCFFRFWLGFGIGG) threads the bilayer. The Cytoplasmic portion of the chain corresponds to 144-164 (DYPLSATIMSEYANKKTRGAF). A helical transmembrane segment spans residues 165-185 (IAAVFAMQGFGILAGGIVALI). The Extracellular portion of the chain corresponds to 186-211 (VSAGFKNAYPAPTYSAHGKDSTPPEA). Residues 212–232 (DYVWRIIVMIGALPALLTYYW) form a helical membrane-spanning segment. The Cytoplasmic portion of the chain corresponds to 233-292 (RMKMPETARYTALVAKNTVKAAADMSKVLNVEIEEDKATVEKIEENGNSFGLFSKEFLRR). Residues 293–313 (HGLHLLGTTSTWFLLDIAFYS) form a helical membrane-spanning segment. The Extracellular segment spans residues 314-345 (QNLFQKDIFSKIGWIPPPETMNALDEVFRIAR). Residues 346–366 (AQTLIALCSTVPGYWFTVAFI) form a helical membrane-spanning segment. At 367–371 (DKMGR) the chain is on the cytoplasmic side. The chain crosses the membrane as a helical span at residues 372-392 (FAIQLMGSFFMTVFMFALAIP). The Extracellular segment spans residues 393 to 402 (YDHWTKKENR). Residues 403–423 (IGFVIMYSLTFFFANFGPNAT) form a helical membrane-spanning segment. At 424 to 442 (TFVVPAEIFPARLRSTCHG) the chain is on the cytoplasmic side. Residues 443–463 (ISAAAGKAGAIVGAFGFLYAA) traverse the membrane as a helical segment. Residues 464 to 483 (QSTDPKKVDAGYPTGIGVKN) lie on the Extracellular side of the membrane. The helical transmembrane segment at 484-504 (ALIVLGCVNFLGMLSTLLVPE) threads the bilayer. Topologically, residues 505–538 (SKGKSLEEMSKENEGEEENYGTETKGENAQTVPV) are cytoplasmic. The segment covering 506–517 (KGKSLEEMSKEN) has biased composition (basic and acidic residues). Residues 506-538 (KGKSLEEMSKENEGEEENYGTETKGENAQTVPV) are disordered.

This sequence belongs to the major facilitator superfamily. Phosphate:H(+) symporter (TC 2.A.1.9) family. Expressed at low levels in non-mycorrhized roots.

Its subcellular location is the cell membrane. The catalysed reaction is phosphate(in) + H(+)(in) = phosphate(out) + H(+)(out). Low-affinity transporter for external inorganic phosphate (Pi) probably involved in the acquisition of phosphate released by arbuscular mycorrhizal (AM) fungi during AM symbiosis. The sequence is that of Low affinity inorganic phosphate transporter 3 from Petunia hybrida (Petunia).